A 203-amino-acid polypeptide reads, in one-letter code: Octanoyltransferase (203 aa).

In terms of domain architecture, BPL/LPL catalytic spans 30 to 203; that stretch reads EDQDNYFFIT…HIIKEGRKLV (174 aa). Substrate contacts are provided by residues 69–76, 135–137, and 148–150; these read RGGSVTFH, SVG, and GIS. Cys-166 acts as the Acyl-thioester intermediate in catalysis.

It belongs to the LipB family.

Its subcellular location is the cytoplasm. It catalyses the reaction octanoyl-[ACP] + L-lysyl-[protein] = N(6)-octanoyl-L-lysyl-[protein] + holo-[ACP] + H(+). The protein operates within protein modification; protein lipoylation via endogenous pathway; protein N(6)-(lipoyl)lysine from octanoyl-[acyl-carrier-protein]: step 1/2. Catalyzes the transfer of endogenously produced octanoic acid from octanoyl-acyl-carrier-protein onto the lipoyl domains of lipoate-dependent enzymes. Lipoyl-ACP can also act as a substrate although octanoyl-ACP is likely to be the physiological substrate. In Persephonella marina (strain DSM 14350 / EX-H1), this protein is Octanoyltransferase.